We begin with the raw amino-acid sequence, 406 residues long: Glycosylated lysosomal membrane protein (406 aa).

An N-terminal signal peptide occupies residues 1–35 (MRGSVECTWGWGHCAPSPLLLWTLLLFAAPFGLLG). The Lumenal segment spans residues 36–372 (EKTRQVSLEV…VDGLSPLVLG (337 aa)). 5 N-linked (GlcNAc...) asparagine glycosylation sites follow: N65, N134, N159, N187, and N230. A helical membrane pass occupies residues 373–393 (IMAVALGAPGLMLLGGGLVLL). Topologically, residues 394 to 406 (LHHKKYSEYQSIN) are cytoplasmic. Residues 402–406 (YQSIN) carry the Lysosomal targeting motif motif.

It belongs to the GLMP family. In terms of assembly, interacts (via lumenal domain) with lysosomal protein MFSD1; the interaction starts while both proteins are still in the endoplasmic reticulum and is required for stabilization of MFSD1 in lysosomes but has no direct effect on its targeting to lysosomes or transporter activity. In terms of processing, highly N-glycosylated. N-glycosylation is essential for GLMP stability and for MFSD1 lysosomal localization.

It is found in the lysosome membrane. Functionally, required to protect lysosomal transporter MFSD1 from lysosomal proteolysis and for MFSD1 lysosomal localization. This Homo sapiens (Human) protein is Glycosylated lysosomal membrane protein.